A 503-amino-acid chain; its full sequence is Long-chain-fatty-acid--CoA ligase FadD13 (503 aa).

It belongs to the ATP-dependent AMP-binding enzyme family. Homodimer.

The protein resides in the cell membrane. The catalysed reaction is a long-chain fatty acid + ATP + CoA = a long-chain fatty acyl-CoA + AMP + diphosphate. Its pathway is lipid metabolism; fatty acid biosynthesis. Functionally, required for maintaining the appropriate mycolic acid composition and permeability of the envelope on its exposure to acidic pH. Catalyzes the activation of long-chain fatty acids as acyl-coenzyme A (acyl-CoA), which are then transferred to the multifunctional polyketide synthase (PKS) type III for further chain extension. This Mycobacterium tuberculosis (strain CDC 1551 / Oshkosh) protein is Long-chain-fatty-acid--CoA ligase FadD13 (fadD13).